The chain runs to 474 residues: Protein IFIT1 homolog B (474 aa).

TPR repeat units follow at residues 52 to 85, 95 to 128, 141 to 174, 182 to 216, 218 to 250, 251 to 284, 305 to 339, 340 to 373, 378 to 412, and 437 to 470; these read VGIHNLLAYVKHLKGQNEEALVSLKKAEDLIQKE, LVTWGNFAWVYYHMGRLAEAQTYLDKVENTCKKF, VDCEEGWALAKCGGKNYERAKTCFEKALEGNPEN, AITVYRLDKFNTASGRNKAFSLHVLKRAVRLNPDD, YIRVLLALKLQDEGQEAEGEKYIEEALTSISSQ, AYVFQYAAKFYRRKGSVDKALELLKMALETTPTS, ATNWQPRGQDRETVDRLVQLAICKFEKTIMLKRTF, EMAYVDLAETYAEIGHHRKAEEHFQKGLRMKIFE, QEIHYHYGRFQEHHGKSQDKAITHYLKGLKIEKMS, and VESVSLLGLIHKLKGEVSDALLCYERALRLAADL.

This sequence belongs to the IFIT family.

In terms of biological role, IFIT1B is likely non-functional, lacking the critical antiviral role of IFIT1. Unlike IFIT1, which is essential in the innate immune response as part of an interferon-dependent multiprotein complex, IFIT1B does not prevent the translation of viral RNAs that lack host-specific 2'-O-methylation at their 5' cap. Consequently, it probably cannot inhibit their translation by competing with the host translation machinery. The sequence is that of Protein IFIT1 homolog B from Homo sapiens (Human).